The primary structure comprises 879 residues: Phosphoenolpyruvate carboxylase (879 aa).

Active-site residues include histidine 138 and lysine 545.

Belongs to the PEPCase type 1 family. Mg(2+) is required as a cofactor.

The enzyme catalyses oxaloacetate + phosphate = phosphoenolpyruvate + hydrogencarbonate. In terms of biological role, forms oxaloacetate, a four-carbon dicarboxylic acid source for the tricarboxylic acid cycle. In Haemophilus influenzae (strain 86-028NP), this protein is Phosphoenolpyruvate carboxylase.